A 319-amino-acid chain; its full sequence is MITFLPIIFSILIVVIFVIGNFANGFIALVNSIEWVKRQKISFVDQILTALAVSRVGLLWVLLLHWYATQLNPAFYSVEVRITAYNVWAVTNHFSSWLATSLSMFYLLRIANFSNLIFLRIKRRVKSVVLVILLGPLLFLVCHLFVINMDETVWTKEYEGNVTWKIKLRSAMYHSNMTLTMLANFVPLTLTLISFLLLICSLCKHLKKMQLHGKGSQDPSTKVHIKALQTVTSFLLLCAIYFLSMIISVCNFGRLEKQPVFMFCQAIIFSYPSTHPFILILGNKKLKQIFLSVLRHVRYWVKDRSLRLHRFTRGALCVF.

Position 1 (M1) is a topological domain, extracellular. A helical transmembrane segment spans residues 2–22 (ITFLPIIFSILIVVIFVIGNF). The Cytoplasmic segment spans residues 23–46 (ANGFIALVNSIEWVKRQKISFVDQ). The helical transmembrane segment at 47–67 (ILTALAVSRVGLLWVLLLHWY) threads the bilayer. Topologically, residues 68–86 (ATQLNPAFYSVEVRITAYN) are extracellular. A helical membrane pass occupies residues 87-107 (VWAVTNHFSSWLATSLSMFYL). The Cytoplasmic segment spans residues 108–126 (LRIANFSNLIFLRIKRRVK). The chain crosses the membrane as a helical span at residues 127–147 (SVVLVILLGPLLFLVCHLFVI). The Extracellular portion of the chain corresponds to 148–178 (NMDETVWTKEYEGNVTWKIKLRSAMYHSNMT). Residues N161 and N176 are each glycosylated (N-linked (GlcNAc...) asparagine). A helical transmembrane segment spans residues 179-199 (LTMLANFVPLTLTLISFLLLI). Residues 200–229 (CSLCKHLKKMQLHGKGSQDPSTKVHIKALQ) lie on the Cytoplasmic side of the membrane. Residues 230 to 250 (TVTSFLLLCAIYFLSMIISVC) traverse the membrane as a helical segment. Topologically, residues 251-259 (NFGRLEKQP) are extracellular. The helical transmembrane segment at 260-280 (VFMFCQAIIFSYPSTHPFILI) threads the bilayer. Topologically, residues 281-319 (LGNKKLKQIFLSVLRHVRYWVKDRSLRLHRFTRGALCVF) are cytoplasmic.

Belongs to the G-protein coupled receptor T2R family. In terms of tissue distribution, expressed in subsets of taste receptor cells of the tongue and exclusively in gustducin-positive cells.

Its subcellular location is the membrane. Functionally, receptor that may play a role in the perception of bitterness and is gustducin-linked. May play a role in sensing the chemical composition of the gastrointestinal content. The activity of this receptor may stimulate alpha gustducin, mediate PLC-beta-2 activation and lead to the gating of TRPM5. This chain is Taste receptor type 2 member 30 (TAS2R30), found in Homo sapiens (Human).